The following is a 429-amino-acid chain: Enolase (429 aa).

Gln-174 lines the (2R)-2-phosphoglycerate pocket. Catalysis depends on Glu-218, which acts as the Proton donor. Residues Asp-254, Glu-295, and Asp-321 each contribute to the Mg(2+) site. The (2R)-2-phosphoglycerate site is built by Lys-346, Arg-375, Ser-376, and Lys-397. Lys-346 functions as the Proton acceptor in the catalytic mechanism.

This sequence belongs to the enolase family. Mg(2+) is required as a cofactor.

It localises to the cytoplasm. It is found in the secreted. The protein localises to the cell surface. The catalysed reaction is (2R)-2-phosphoglycerate = phosphoenolpyruvate + H2O. It participates in carbohydrate degradation; glycolysis; pyruvate from D-glyceraldehyde 3-phosphate: step 4/5. Catalyzes the reversible conversion of 2-phosphoglycerate (2-PG) into phosphoenolpyruvate (PEP). It is essential for the degradation of carbohydrates via glycolysis. The chain is Enolase from Methanosarcina acetivorans (strain ATCC 35395 / DSM 2834 / JCM 12185 / C2A).